The sequence spans 331 residues: Serine/threonine-protein phosphatase 6 catalytic subunit (331 aa).

Residues aspartate 79, histidine 81, aspartate 107, and asparagine 139 each coordinate Mn(2+). The Proton donor role is filled by histidine 140. Mn(2+)-binding residues include histidine 189 and histidine 264.

Belongs to the PPP phosphatase family. PP-6 (PP-V) subfamily. Forms a complex composed of catalytic subunit pph-6 and regulatory subunit saps-1; the interaction increases pph-6 and saps-1 protein stability. It depends on Mn(2+) as a cofactor.

It localises to the cytoplasm. The protein localises to the cell cortex. Its subcellular location is the cytoskeleton. It is found in the spindle pole. It carries out the reaction O-phospho-L-seryl-[protein] + H2O = L-seryl-[protein] + phosphate. The enzyme catalyses O-phospho-L-threonyl-[protein] + H2O = L-threonyl-[protein] + phosphate. Functionally, catalytic subunit of protein phosphatase 6 (PP6). In complex with saps-1, promotes actomyosin contractility during cytokinesis by regulating the organization of cortical non-muscle myosin II nmy-2 and thus contributing to correct spindle positioning. Also required for the proper generation of pulling forces on spindle poles during anaphase by regulating the cortical localization of gpr-1, gpr-2 and lin-5. This chain is Serine/threonine-protein phosphatase 6 catalytic subunit, found in Caenorhabditis elegans.